The sequence spans 233 residues: Histone H1-I (233 aa).

Disordered regions lie at residues 1–55 and 115–233; these read MSDS…HPPV and TGAS…KKSK. The segment covering 17–29 has biased composition (low complexity); the sequence is KAASPAKSPAKSP. One can recognise an H15 domain in the interval 51-125; sequence THPPVSEMVV…GASGSFKMPP (75 aa). 2 stretches are compositionally biased toward basic and acidic residues: residues 128–137 and 146–155; these read KKVDRPESAP and TRVERKEKKV. Basic residues-rich tracts occupy residues 172-213 and 223-233; these read AAKK…KPTP and AAARKPAKKSK.

This sequence belongs to the histone H1/H5 family.

It is found in the nucleus. The protein localises to the chromosome. In terms of biological role, histones H1 are necessary for the condensation of nucleosome chains into higher-order structures. The protein is Histone H1-I of Glyptotendipes barbipes (Midge).